Reading from the N-terminus, the 214-residue chain is NADH-quinone oxidoreductase subunit C (214 aa).

It belongs to the complex I 30 kDa subunit family. As to quaternary structure, NDH-1 is composed of 14 different subunits. Subunits NuoB, C, D, E, F, and G constitute the peripheral sector of the complex.

The protein localises to the cell inner membrane. It catalyses the reaction a quinone + NADH + 5 H(+)(in) = a quinol + NAD(+) + 4 H(+)(out). NDH-1 shuttles electrons from NADH, via FMN and iron-sulfur (Fe-S) centers, to quinones in the respiratory chain. The immediate electron acceptor for the enzyme in this species is believed to be ubiquinone. Couples the redox reaction to proton translocation (for every two electrons transferred, four hydrogen ions are translocated across the cytoplasmic membrane), and thus conserves the redox energy in a proton gradient. In Francisella tularensis subsp. mediasiatica (strain FSC147), this protein is NADH-quinone oxidoreductase subunit C.